The chain runs to 186 residues: NADH-ubiquinone oxidoreductase 17.8 kDa subunit, mitochondrial (186 aa).

The N-terminal 26 residues, 1 to 26, are a transit peptide targeting the mitochondrion; that stretch reads MSSFRLGVSRVARQVRAPCVRNTRRY. The tract at residues 22–49 is disordered; that stretch reads NTRRYASDSHAPADHTHSAAGHGEHHHA. Positions 26-49 are enriched in basic and acidic residues; that stretch reads YASDSHAPADHTHSAAGHGEHHHA. A helical transmembrane segment spans residues 58 to 78; it reads LGTAFYVIFGAIPAFGALYYF.

As to quaternary structure, complex I is composed of about 40 different subunits.

It localises to the mitochondrion inner membrane. The catalysed reaction is a ubiquinone + NADH + 5 H(+)(in) = a ubiquinol + NAD(+) + 4 H(+)(out). Transfer of electrons from NADH to the respiratory chain. The immediate electron acceptor for the enzyme is believed to be ubiquinone. The sequence is that of NADH-ubiquinone oxidoreductase 17.8 kDa subunit, mitochondrial (nuo17.8) from Neurospora crassa (strain ATCC 24698 / 74-OR23-1A / CBS 708.71 / DSM 1257 / FGSC 987).